The chain runs to 1136 residues: Pesticidal crystal protein Cry4B protoxin (1136 aa).

A domain I region spans residues 84–282; that stretch reads TPERVWNDFM…PADKIDNTKL (199 aa). Residues 283 to 466 are domain II; the sequence is SKTEFTREIY…SNRVSFAWTH (184 aa). The interval 467 to 641 is domain III; that stretch reads KIVDPNNQIY…PITQSVLDET (175 aa).

Belongs to the delta endotoxin family. As to quaternary structure, in the presence of micelles active toxin forms oligomers that can be fit into cryo-EM maps as trimers. Binds to host (A.gambiae) cadherin AgCad1 (also called BT-R3), probably on the cell surface. Activated toxin may bind its host AgCad1 receptor as a monomer, but also forms an oligomer that is not active. The cofactor is Mg(2+). Post-translationally, treatment of recombinant protein with A.aegypti 3rd instar larvae midgut extract for 1 hour yields major bands of 72 and 45 kDa, the combined proteins are toxic to mosquitoes. Longer digestion, which removes the 72 kDa protein, yields a non-toxic preparation. Proteolysis by yields a 65 kDa toxic protein and 48 and 17 kDa fragments which are not toxic. Host (A.gambiae) larval midgut; binds to host brush border membranes, probably to cadherin-AgCad1 (Cad1, also called BT-R3).

The protein resides in the spore. Its activity is regulated as follows. Toxic activity on Trichoplusia ni insect cells stably transfected with the AgCad1/BT-R3 receptor leads to oncosis, cell death characterized by cell swelling, membrane blebbing and depletion of energy reserves. Cell death is blocked by EDTA (but not EGTA) and is partially prevented by pretreatment with NF449 (inhibits G-s-alpha-60A and adenylyl cyclase, AC) and 2',5'-dideoxyadenosine 3'-diphosphate (ddADP, inhibits AC), while H-89 and PKAI 14-22 (both inhibit protein kinase A), ouabain (inhibits Na+/K+-ATPase) and a cell exocytosis inhibitor (Exo1) nearly completely prevent the action of the toxin in this system. The cAMP analog pCPT-cAMP and the AC activator FSK enhance toxicity. A pesticidal protein active against Aedes and Anopheles mosquito species; activity on Culex species is strain dependent. It remains toxic to permethrin-resistant strains of A.gambiae. Following activation of the protoxin by mosquito larvae midgut extract (or by chymotrypsin or trypsin treatment) it becomes insecticidal. Causes mosquito cell death by activating a host G-protein-coupled receptor which subsequently activates adenylyl cyclase and increases cAMP production. cAMP activates protein kinase A which sets off a series of downstream events which includes increased exocytosis (probably bringing more receptor to the cell membrane), Na+/K+-ATPase activation and eventual host cell death. Another group suggests that alkaline phosphatase serves as the insect receptor and that the protein forms pores in insect cell membranes. This is Pesticidal crystal protein Cry4B protoxin from Bacillus thuringiensis subsp. israelensis.